The chain runs to 292 residues: Protease HtpX (292 aa).

2 consecutive transmembrane segments (helical) span residues I5–L25 and S34–L54. Residue H140 participates in Zn(2+) binding. E141 is a catalytic residue. H144 serves as a coordination point for Zn(2+). 2 helical membrane-spanning segments follow: residues L155–I175 and I193–F213. E218 is a Zn(2+) binding site.

This sequence belongs to the peptidase M48B family. Zn(2+) is required as a cofactor.

It localises to the cell inner membrane. This chain is Protease HtpX, found in Xanthomonas euvesicatoria pv. vesicatoria (strain 85-10) (Xanthomonas campestris pv. vesicatoria).